Reading from the N-terminus, the 152-residue chain is UPF0756 membrane protein JDM1_1594 (152 aa).

Transmembrane regions (helical) follow at residues 25-45 (ATVV…LTTI), 52-72 (WGVT…QIGF), 85-105 (WIAV…VGLL), and 115-135 (LVFG…GPII).

This sequence belongs to the UPF0756 family.

The protein resides in the cell membrane. This chain is UPF0756 membrane protein JDM1_1594, found in Lactiplantibacillus plantarum (strain JDM1) (Lactobacillus plantarum).